A 412-amino-acid polypeptide reads, in one-letter code: Putative competence-damage inducible protein (412 aa).

The protein belongs to the CinA family.

The chain is Putative competence-damage inducible protein from Caldanaerobacter subterraneus subsp. tengcongensis (strain DSM 15242 / JCM 11007 / NBRC 100824 / MB4) (Thermoanaerobacter tengcongensis).